We begin with the raw amino-acid sequence, 363 residues long: S-adenosylmethionine:tRNA ribosyltransferase-isomerase (363 aa).

The protein belongs to the QueA family. Monomer.

It localises to the cytoplasm. It carries out the reaction 7-aminomethyl-7-carbaguanosine(34) in tRNA + S-adenosyl-L-methionine = epoxyqueuosine(34) in tRNA + adenine + L-methionine + 2 H(+). The protein operates within tRNA modification; tRNA-queuosine biosynthesis. In terms of biological role, transfers and isomerizes the ribose moiety from AdoMet to the 7-aminomethyl group of 7-deazaguanine (preQ1-tRNA) to give epoxyqueuosine (oQ-tRNA). The sequence is that of S-adenosylmethionine:tRNA ribosyltransferase-isomerase from Synechococcus sp. (strain RCC307).